A 127-amino-acid polypeptide reads, in one-letter code: uncharacterized protein (127 aa).

Disordered regions lie at residues 1-22 (MLPAGCWNDTSRDGPGFRKMKG) and 53-106 (LVGK…PGPK). The segment covering 76 to 95 (PNGEAHAEQARRKISVEEKQ) has biased composition (basic and acidic residues).

It is found in the mitochondrion. This is an uncharacterized protein from Arabidopsis thaliana (Mouse-ear cress).